We begin with the raw amino-acid sequence, 257 residues long: MSQIEFKDVRKVYSNGHVGLDRINLNIEKGDFAVIVGLSGSGKSTLLRSINRLHDITEGEILIDGKSMTKASGNQLLEMRRNIGMIFQNFNLVKRSSVMRNVLSGRVGYHPTWKMVLGLFPKEDKIKALEALDRVNILDKYKSRSDELSGGQQQRISIARALCQEPAIILADEPVASLDPLTTKQVMDDLKRINQELGITIIINLHFVDLAREYGTRIIGLRDGQLVFDGPVERATDEAFNEIYGRSIQDEEKLGVN.

In terms of domain architecture, ABC transporter spans 4–248; that stretch reads IEFKDVRKVY…AFNEIYGRSI (245 aa). 37 to 44 contributes to the ATP binding site; the sequence is GLSGSGKS.

The protein belongs to the ABC transporter superfamily. Phosphonates importer (TC 3.A.1.9.1) family. In terms of assembly, the complex is composed of two ATP-binding proteins (PhnC), two transmembrane proteins (PhnE) and a solute-binding protein (PhnD).

It localises to the cell membrane. The enzyme catalyses phosphonate(out) + ATP + H2O = phosphonate(in) + ADP + phosphate + H(+). In terms of biological role, part of the ABC transporter complex PhnCDE involved in phosphonates import. Responsible for energy coupling to the transport system. The protein is Phosphonates import ATP-binding protein PhnC of Staphylococcus saprophyticus subsp. saprophyticus (strain ATCC 15305 / DSM 20229 / NCIMB 8711 / NCTC 7292 / S-41).